Here is a 410-residue protein sequence, read N- to C-terminus: D-amino acid dehydrogenase (410 aa).

9-14 contacts FAD; that stretch reads GGGIVG.

Belongs to the DadA oxidoreductase family. The cofactor is FAD.

The protein resides in the cell inner membrane. It catalyses the reaction a D-alpha-amino acid + a quinone + H2O = a 2-oxocarboxylate + a quinol + NH4(+). Activity is markedly inhibited by benzoate, and moderately by SH reagents such as p-hydroxymercuribenzoate, iodoacetamide, and iodoacetate. Functionally, catalyzes the oxidative deamination of D-amino acids. Has broad substrate specificity; is mostly active on D-proline, and to a lesser extent, on several other D-amino acids such as D-alanine, D-phenylalanine and D-serine. Mediates electron transport from D-proline to coenzyme Q1 in vitro, and is involved in the electron transport chain from D-proline to the c-type cytochrome in vivo. The polypeptide is D-amino acid dehydrogenase (Helicobacter pylori (Campylobacter pylori)).